A 453-amino-acid chain; its full sequence is Retroviral integration site protein Fli-1 homolog (453 aa).

Residues 111 to 197 (PPPPNMTTNE…SHLNYLRDSS (87 aa)) form the PNT domain. Over residues 201–214 (GYNTQAHTDQSSRL) the composition is skewed to polar residues. The interval 201–273 (GYNTQAHTDQ…YQILGPTSSR (73 aa)) is disordered. Basic and acidic residues predominate over residues 215–226 (TAKEDPSYEAVR). 2 stretches are compositionally biased toward polar residues: residues 230–239 (WGNSMSSPVT) and 246–273 (GTQNVNKSGDQQRSQPDPYQILGPTSSR). The ETS DNA-binding region spans 282 to 362 (IQLWQFLLEL…HGKRYAYKFD (81 aa)).

It belongs to the ETS family.

It localises to the nucleus. The chain is Retroviral integration site protein Fli-1 homolog (fli1) from Xenopus laevis (African clawed frog).